We begin with the raw amino-acid sequence, 359 residues long: MAGMKSSPSQDEEACVLAIQLATSTVLPMILKSAIELDILNTISKAGPGNYLSPSDLASKLLMSNPHAPIMLERILRVLATYKVLGCKRSELSNGEVEWLYCWTPVCKFLSNNEDGASIAPLLLVHQDKVPMKSWYHLTDAVLDGGTAFNKAYGMNIFDYASQDPQFNKVFNRSMAGHSTITMKKIVETYNGFEGLKSIVDVGGGSGATLNMIISKYPTIKGINFDLPHVVGDSPIHPGVEHVGGDMFASVPKGDAIFLKWIFHSWSDEDCLRILKNCYEALADNKKVIVAEFIIPEVPGGSDDATKSVVHLDAIMLAYVPGGKERTEKEFESLATRAGFKSFRKVCCAFNTWIMEFSK.

Bergaptol is bound at residue histidine 126. S-adenosyl-L-homocysteine-binding residues include serine 179, glycine 203, aspartate 226, aspartate 246, and lysine 260. Bergaptol is bound at residue histidine 264. The active-site Proton acceptor is the histidine 264.

Belongs to the class I-like SAM-binding methyltransferase superfamily. Cation-independent O-methyltransferase family. COMT subfamily.

The enzyme catalyses a 5-hydroxyfurocoumarin + S-adenosyl-L-methionine = a 5-methoxyfurocoumarin + S-adenosyl-L-homocysteine + H(+). It carries out the reaction bergaptol + S-adenosyl-L-methionine = bergapten + S-adenosyl-L-homocysteine. Inhibited by Cu(2+), Ni(2+) and Co(2+). This Glehnia littoralis (Beach silvertop) protein is Bergaptol O-methyltransferase.